A 671-amino-acid chain; its full sequence is Phosphoenolpyruvate carboxykinase (ATP) 1 (671 aa).

Low complexity predominate over residues 1 to 10 (MSAGNGNATN). The disordered stretch occupies residues 1–44 (MSAGNGNATNGDGGFSFPKGPVMPKITTGAAKRGSGVCHDDSGP). The residue at position 2 (S2) is an N-acetylserine. At S62 the chain carries Phosphoserine. Phosphothreonine is present on T66. The tract at residues 100-127 (TRESGPKVVRGDPAEKKTDGSTTPAYAH) is disordered. Residues 108 to 118 (VRGDPAEKKTD) are compositionally biased toward basic and acidic residues. Position 189 (R189) interacts with substrate. Residues H270 and N271 each contribute to the Ca(2+) site. Residues Y328 and K334 each contribute to the substrate site. ATP contacts are provided by residues K334, H353, and 369 to 377 (GLSGTGKTT). Mn(2+)-binding residues include K334 and H353. D390 contributes to the Mn(2+) binding site. Residue G404 participates in Ca(2+) binding. Residues E418, R455, 574–575 (RI), I575, and T580 each bind ATP. R455 lines the substrate pocket.

This sequence belongs to the phosphoenolpyruvate carboxykinase (ATP) family. In terms of assembly, monomer. It depends on Mn(2+) as a cofactor. As to expression, expressed in cotyledons, flowers, siliques, seeds, leaves, stems and roots. Localized in mid-veins.

Its subcellular location is the cytoplasm. The enzyme catalyses oxaloacetate + ATP = phosphoenolpyruvate + ADP + CO2. It functions in the pathway carbohydrate biosynthesis; gluconeogenesis. Its activity is regulated as follows. Allosterically activated by calcium. It may represent the only case of a monomeric, allosteric enzyme. Its function is as follows. Involved in the gluconeogenesis. Catalyzes the conversion of oxaloacetate (OAA) to phosphoenolpyruvate (PEP) through direct phosphoryl transfer between the nucleoside triphosphate and OAA. This Arabidopsis thaliana (Mouse-ear cress) protein is Phosphoenolpyruvate carboxykinase (ATP) 1.